A 516-amino-acid chain; its full sequence is Gastrula zinc finger protein XlCGF53.1 (516 aa).

Disordered regions lie at residues 1-33 (MGMWEEASDTGMKGKKKKKDKNEEEEEERGKKE) and 200-220 (GNQSDCSINPLTEQIQGTDKP). A compositionally biased stretch (polar residues) spans 200–218 (GNQSDCSINPLTEQIQGTD). C2H2-type zinc fingers lie at residues 312 to 334 (YICSECQKHFSTKAGLARHQKTH), 354 to 376 (FPCSECGKRFARRQHLTDHQSSH), 382 to 404 (YACSQCEKYFPHRSNLNRHLKLH), 410 to 432 (FPCSQCGKRFPCVSDLNIHRRVH), 438 to 460 (YSCSECGKCFKHHSNLTNHQRTH), 466 to 488 (FSCTECGKGFKDRSSLTVHHRTH), and 494 to 516 (FSCTECGKGFKDRSSLTVHHRTH).

The protein belongs to the krueppel C2H2-type zinc-finger protein family.

Its subcellular location is the nucleus. In terms of biological role, may be involved in transcriptional regulation. In Xenopus laevis (African clawed frog), this protein is Gastrula zinc finger protein XlCGF53.1.